The following is a 129-amino-acid chain: Beta-galactoside-binding lectin (129 aa).

Serine 1 bears the N-acetylserine mark. The Galectin domain maps to glycine 4–lysine 129. Tryptophan 69–glutamate 75 lines the a beta-D-galactoside pocket.

Its function is as follows. This protein binds beta-galactoside. Its physiological function is not yet known. The protein is Beta-galactoside-binding lectin of Electrophorus electricus (Electric eel).